The primary structure comprises 35 residues: Tamulustoxin (35 aa).

3 cysteine pairs are disulfide-bonded: C2/C22, C7/C31, and C11/C33.

Expressed by the venom gland.

Its subcellular location is the secreted. Functionally, blocks Kv1.6/KCNA6 potassium channels. This chain is Tamulustoxin, found in Hottentotta tamulus (Eastern Indian scorpion).